The following is a 663-amino-acid chain: 4-hydroxy-3-methylbut-2-en-1-yl diphosphate synthase (flavodoxin) (663 aa).

[4Fe-4S] cluster-binding residues include cysteine 568, cysteine 571, cysteine 602, and glutamate 609.

It belongs to the IspG family. It depends on [4Fe-4S] cluster as a cofactor.

It catalyses the reaction (2E)-4-hydroxy-3-methylbut-2-enyl diphosphate + oxidized [flavodoxin] + H2O + 2 H(+) = 2-C-methyl-D-erythritol 2,4-cyclic diphosphate + reduced [flavodoxin]. The protein operates within isoprenoid biosynthesis; isopentenyl diphosphate biosynthesis via DXP pathway; isopentenyl diphosphate from 1-deoxy-D-xylulose 5-phosphate: step 5/6. Its function is as follows. Converts 2C-methyl-D-erythritol 2,4-cyclodiphosphate (ME-2,4cPP) into 1-hydroxy-2-methyl-2-(E)-butenyl 4-diphosphate. The chain is 4-hydroxy-3-methylbut-2-en-1-yl diphosphate synthase (flavodoxin) from Leptospira borgpetersenii serovar Hardjo-bovis (strain JB197).